A 606-amino-acid chain; its full sequence is Flagellar WD repeat-containing protein Pf20 (606 aa).

The segment at 229 to 250 (PLPGAERSLGGQSTAAAGGGAS) is disordered. WD repeat units follow at residues 324 to 354 (GHLLSVANLALHPTKPILVTASDDKTWKMWH), 366 to 396 (GHKDWVAGVDFHPAGTCLASGGGDSAVKIWD), 408 to 438 (DHKQAIWSVRFHHLGEVVASGSLDHTVRLWD), 450 to 480 (GHVDSVNDLAWQPFSSSLATASSDKTVSVWD), 492 to 522 (GHQNSCNGVSFNILGTQLASTDADGVVKLWD), 534 to 564 (TGKHPANKSCFDRSGQVLAVACDDGKVKAYS), and 576 to 606 (GHEDAVQAVLFDPAGQYLVSCGSDNTFRLWS).

Inter-microtubule bridges in flagella.

It localises to the cell projection. It is found in the cilium. The protein localises to the flagellum. This is Flagellar WD repeat-containing protein Pf20 (PF20) from Chlamydomonas reinhardtii (Chlamydomonas smithii).